The chain runs to 216 residues: 4-hydroxy-tetrahydrodipicolinate reductase (216 aa).

Residues 9 to 12 (SGRM), 71 to 73 (GTT), and 95 to 98 (AYNF) each bind NAD(+). His-127 (proton donor/acceptor) is an active-site residue. (S)-2,3,4,5-tetrahydrodipicolinate is bound at residue His-128. NAD(+) is bound at residue Lys-131. Residue Lys-131 is the Proton donor of the active site. 137–138 (GT) contacts (S)-2,3,4,5-tetrahydrodipicolinate.

This sequence belongs to the DapB family. As to quaternary structure, homotetramer.

Its subcellular location is the cytoplasm. It catalyses the reaction (S)-2,3,4,5-tetrahydrodipicolinate + NAD(+) + H2O = (2S,4S)-4-hydroxy-2,3,4,5-tetrahydrodipicolinate + NADH + H(+). It carries out the reaction (S)-2,3,4,5-tetrahydrodipicolinate + NADP(+) + H2O = (2S,4S)-4-hydroxy-2,3,4,5-tetrahydrodipicolinate + NADPH + H(+). The protein operates within amino-acid biosynthesis; L-lysine biosynthesis via DAP pathway; (S)-tetrahydrodipicolinate from L-aspartate: step 4/4. Its activity is regulated as follows. Is inhibited by high concentrations of NADH. In terms of biological role, catalyzes the conversion of 4-hydroxy-tetrahydrodipicolinate (HTPA) to tetrahydrodipicolinate. Uses NADPH as a reductant with much more efficiency than NADH. The protein is 4-hydroxy-tetrahydrodipicolinate reductase of Thermotoga maritima (strain ATCC 43589 / DSM 3109 / JCM 10099 / NBRC 100826 / MSB8).